The chain runs to 469 residues: Light-independent protochlorophyllide reductase subunit N (469 aa).

[4Fe-4S] cluster is bound by residues Cys-24, Cys-49, and Cys-109.

Belongs to the BchN/ChlN family. In terms of assembly, protochlorophyllide reductase is composed of three subunits; ChlL, ChlN and ChlB. Forms a heterotetramer of two ChlB and two ChlN subunits. [4Fe-4S] cluster serves as cofactor.

The enzyme catalyses chlorophyllide a + oxidized 2[4Fe-4S]-[ferredoxin] + 2 ADP + 2 phosphate = protochlorophyllide a + reduced 2[4Fe-4S]-[ferredoxin] + 2 ATP + 2 H2O. It participates in porphyrin-containing compound metabolism; chlorophyll biosynthesis (light-independent). Component of the dark-operative protochlorophyllide reductase (DPOR) that uses Mg-ATP and reduced ferredoxin to reduce ring D of protochlorophyllide (Pchlide) to form chlorophyllide a (Chlide). This reaction is light-independent. The NB-protein (ChlN-ChlB) is the catalytic component of the complex. In Synechocystis sp. (strain ATCC 27184 / PCC 6803 / Kazusa), this protein is Light-independent protochlorophyllide reductase subunit N.